Consider the following 1370-residue polypeptide: Putative Polycomb group protein ASXL2 (1370 aa).

Residues 11–86 (RTWAEAAKTV…RMGVYTLKKD (76 aa)) form the HTH HARE-type domain. The interval 92 to 216 (KELSECSEES…DSVPAKPGQM (125 aa)) is disordered. Over residues 103 to 120 (DGQSDSHSSDNSSSSDGG) the composition is skewed to low complexity. Residues 141–152 (PPSPPSGCPSPT) are compositionally biased toward pro residues. Serine 150 is subject to Phosphoserine. A Nuclear localization signal motif is present at residues 178–182 (QQKKK). A compositionally biased stretch (polar residues) spans 186–198 (CRPSMSISNQHLS). A DEUBAD domain is found at 229–338 (PDSILVNTNL…FENYYGQSSG (110 aa)). Positions 258 to 262 (LLLLL) match the LXXLL motif motif. Disordered stretches follow at residues 340–487 (SLED…AGLQ) and 516–535 (QESL…SSWE). Positions 398 to 412 (QKEENQDEARPDSKS) are enriched in basic and acidic residues. 4 positions are modified to phosphoserine: serine 477, serine 524, serine 553, and serine 590. Arginine 594 is modified (asymmetric dimethylarginine). Residue serine 601 is modified to Phosphoserine. Residues 643–652 (IPGPGPGGGQ) are compositionally biased toward gly residues. Disordered stretches follow at residues 643 to 734 (IPGP…LASS), 805 to 891 (PKAG…SSIP), and 1103 to 1175 (GHAD…VSEQ). Composition is skewed to polar residues over residues 719–734 (AQLQ…LASS) and 830–839 (MTSSPVTTAS). The segment covering 849 to 870 (SGTATSTGSAPSSSTLPAASSL) has biased composition (low complexity). A compositionally biased stretch (polar residues) spans 871–891 (KTPGTSANMNGPISRTSSSIP). A compositionally biased stretch (acidic residues) spans 1119-1131 (DESDEDRVGDEQE). Phosphoserine occurs at positions 1121 and 1254. The segment at 1332-1369 (PSKCYCRLKAMIMCKGCGAFCHDDCIGPSKLCVSCLVV) adopts a PHD-type; atypical zinc-finger fold.

It belongs to the Asx family. In terms of assembly, core component of the polycomb repressive deubiquitinase (PR-DUB) complex, at least composed of BAP1, one of ASXL1, ASXL2 or (probably) ASXL3, and one of MBD5 or MBD6. Distinct combinations of ASXL and MBD proteins may preferentially bind specific histone modification marks. The PR-DUB core associates with a number of accessory proteins, including FOXK1, FOXK2, KDM1B, HCFC1 and OGT; KDM1B specifically associates with ASXL2 PR-DUB complexes. Interacts (via PHD domain) with MBD5 and MBD6 (via MBD domain); the interaction is probably direct and mediates association of MBD proteins with the PR-DUB core. Interacts with PPARA and PPARG.

Its subcellular location is the nucleus. Its function is as follows. Putative Polycomb group (PcG) protein. PcG proteins act by forming multiprotein complexes, which are required to maintain the transcriptionally repressive state of homeotic genes throughout development. PcG proteins are not required to initiate repression, but to maintain it during later stages of development. They probably act via methylation of histones, rendering chromatin heritably changed in its expressibility. Involved in transcriptional regulation mediated by ligand-bound nuclear hormone receptors, such as peroxisome proliferator-activated receptor gamma (PPARG). Acts as a coactivator for PPARG and enhances its adipocyte differentiation-inducing activity; the function seems to involve differential recruitment of acetylated and methylated histone H3. Non-catalytic component of the PR-DUB complex, a complex that specifically mediates deubiquitination of histone H2A monoubiquitinated at 'Lys-119' (H2AK119ub1). The PR-DUB complex is an epigenetic regulator of gene expression and acts as a transcriptional coactivator, affecting genes involved in development, cell communication, signaling, cell proliferation and cell viability. ASXL1, ASXL2 and ASXL3 function redundantly in the PR-DUB complex. The ASXL proteins are essential for chromatin recruitment and transcriptional activation of associated genes. ASXL1 and ASXL2 are important for BAP1 protein stability. This is Putative Polycomb group protein ASXL2 (Asxl2) from Mus musculus (Mouse).